A 282-amino-acid chain; its full sequence is MSSYENHQALDGLTLGKSTDYRDNYDVSLLQGVPRSLNRDPLGLTADNLPFHGADIWTLYELSWLNSQGLPQVAVGHVELDYTSVNLIESKSFKLYLNSFNQTRFDTWETVRQTLERDLRACAQGNVSVRLHRLDELEGQPVAHFHGACIDDQDISIDNYQFTTDYLQHAVSGEKQVEETLVSHLLKSNCLITHQPDWGSIQIQYRGRKIDREKLLRYLVSFRHHNEFHEQCVERIFNDILRFCQPETLSIYARYTRRGGLDINPWRSNTDFVPATGRLARQ.

88–90 provides a ligand contact to substrate; that stretch reads IES. 90-91 contributes to the NADPH binding site; the sequence is SK. C190 acts as the Thioimide intermediate in catalysis. D197 (proton donor) is an active-site residue. 229–230 is a substrate binding site; it reads HE. 258 to 259 contributes to the NADPH binding site; the sequence is RG.

It belongs to the GTP cyclohydrolase I family. QueF type 2 subfamily. As to quaternary structure, homodimer.

The protein localises to the cytoplasm. The catalysed reaction is 7-aminomethyl-7-carbaguanine + 2 NADP(+) = 7-cyano-7-deazaguanine + 2 NADPH + 3 H(+). Its pathway is tRNA modification; tRNA-queuosine biosynthesis. In terms of biological role, catalyzes the NADPH-dependent reduction of 7-cyano-7-deazaguanine (preQ0) to 7-aminomethyl-7-deazaguanine (preQ1). This is NADPH-dependent 7-cyano-7-deazaguanine reductase from Salmonella paratyphi A (strain ATCC 9150 / SARB42).